A 357-amino-acid chain; its full sequence is Acyl-CoA Delta12-desaturase (357 aa).

Helical transmembrane passes span 49–69 (VLWFVLLHAGALYGVYLIFAS) and 72–92 (IYTTLYGFLLCELSLLSITAG). H94, H99, H131, H134, and H135 together coordinate Fe cation. Residues 94 to 99 (HRLWAH) carry the Histidine box-1 motif. Positions 131–135 (HRVHH) match the Histidine box-2 motif. The next 2 helical transmembrane spans lie at 195–215 (LVPFVSFVIPTLIPMYFWGET) and 223–245 (STMFRYCLSLNLTWLVNSAAHMW). Fe cation is bound by residues H243, H272, H275, and H276. Residues 272-276 (HNFHH) carry the Histidine box-3 motif.

This sequence belongs to the fatty acid desaturase type 1 family. Requires Fe(2+) as cofactor.

The protein localises to the membrane. The catalysed reaction is (9Z)-octadecenoyl-CoA + 2 Fe(II)-[cytochrome b5] + O2 + 2 H(+) = (9Z,12Z)-octadecadienoyl-CoA + 2 Fe(III)-[cytochrome b5] + 2 H2O. It catalyses the reaction (9Z)-hexadecenoyl-CoA + 2 Fe(II)-[cytochrome b5] + O2 + 2 H(+) = (9Z,12Z)-hexadecadienoyl-CoA + 2 Fe(III)-[cytochrome b5] + 2 H2O. The enzyme catalyses hexadecanoyl-CoA + 2 Fe(II)-[cytochrome b5] + O2 + 2 H(+) = (9Z)-hexadecenoyl-CoA + 2 Fe(III)-[cytochrome b5] + 2 H2O. Catalyzes the formation of a Delta12 double bond, acting on monounsaturated fatty acyl substrates like palmitoleoyl-CoA ((9Z)-hexadecenoyl-CoA) and oleoyl-CoA ((9Z)-octadecenoyl-CoA) with higher desaturation activity on (9Z)-octadecenoyl-CoA than (9Z)-hexadecenoyl-CoA. Requires preexisting cis double bond at the Delta9 position of fatty acyls to be able to insert the Delta12 double bond. Delta12-desaturation of (9Z)-octadecenoyl-CoA in insects produces (9Z,12Z)-octadecadienoyl-CoA (linoleoyl-CoA) which may be used to supply precursors of crucial mediators of immunity and reproduction and other essential functions. Can also catalyze Delta9-desaturation on saturated fatty acyl substrates like palmitoyl-CoA (hexadecanoyl-CoA) but with lower efficiency. In Acheta domesticus (House cricket), this protein is Acyl-CoA Delta12-desaturase.